Consider the following 211-residue polypeptide: Thiamine-phosphate synthase (211 aa).

4-amino-2-methyl-5-(diphosphooxymethyl)pyrimidine is bound by residues 37-41 (QLRIK) and asparagine 69. 2 residues coordinate Mg(2+): aspartate 70 and aspartate 89. Residue serine 108 coordinates 4-amino-2-methyl-5-(diphosphooxymethyl)pyrimidine. 134–136 (TQT) serves as a coordination point for 2-[(2R,5Z)-2-carboxy-4-methylthiazol-5(2H)-ylidene]ethyl phosphate. Residue lysine 137 coordinates 4-amino-2-methyl-5-(diphosphooxymethyl)pyrimidine. 2-[(2R,5Z)-2-carboxy-4-methylthiazol-5(2H)-ylidene]ethyl phosphate is bound by residues glycine 166 and 186-187 (VS).

This sequence belongs to the thiamine-phosphate synthase family. It depends on Mg(2+) as a cofactor.

It catalyses the reaction 2-[(2R,5Z)-2-carboxy-4-methylthiazol-5(2H)-ylidene]ethyl phosphate + 4-amino-2-methyl-5-(diphosphooxymethyl)pyrimidine + 2 H(+) = thiamine phosphate + CO2 + diphosphate. The enzyme catalyses 2-(2-carboxy-4-methylthiazol-5-yl)ethyl phosphate + 4-amino-2-methyl-5-(diphosphooxymethyl)pyrimidine + 2 H(+) = thiamine phosphate + CO2 + diphosphate. The catalysed reaction is 4-methyl-5-(2-phosphooxyethyl)-thiazole + 4-amino-2-methyl-5-(diphosphooxymethyl)pyrimidine + H(+) = thiamine phosphate + diphosphate. It participates in cofactor biosynthesis; thiamine diphosphate biosynthesis; thiamine phosphate from 4-amino-2-methyl-5-diphosphomethylpyrimidine and 4-methyl-5-(2-phosphoethyl)-thiazole: step 1/1. Condenses 4-methyl-5-(beta-hydroxyethyl)thiazole monophosphate (THZ-P) and 2-methyl-4-amino-5-hydroxymethyl pyrimidine pyrophosphate (HMP-PP) to form thiamine monophosphate (TMP). This Shigella dysenteriae serotype 1 (strain Sd197) protein is Thiamine-phosphate synthase.